We begin with the raw amino-acid sequence, 121 residues long: Ribosome-binding factor A (121 aa).

It belongs to the RbfA family. In terms of assembly, monomer. Binds 30S ribosomal subunits, but not 50S ribosomal subunits or 70S ribosomes.

It is found in the cytoplasm. In terms of biological role, one of several proteins that assist in the late maturation steps of the functional core of the 30S ribosomal subunit. Associates with free 30S ribosomal subunits (but not with 30S subunits that are part of 70S ribosomes or polysomes). Required for efficient processing of 16S rRNA. May interact with the 5'-terminal helix region of 16S rRNA. The protein is Ribosome-binding factor A of Clostridium tetani (strain Massachusetts / E88).